A 263-amino-acid chain; its full sequence is 3-methyl-2-oxobutanoate hydroxymethyltransferase (263 aa).

Mg(2+)-binding residues include Asp-45 and Asp-84. Residues 45–46 (DS), Asp-84, and Lys-112 contribute to the 3-methyl-2-oxobutanoate site. Glu-114 contacts Mg(2+). The active-site Proton acceptor is Glu-180.

It belongs to the PanB family. Homodecamer; pentamer of dimers. Mg(2+) serves as cofactor.

The protein resides in the cytoplasm. The catalysed reaction is 3-methyl-2-oxobutanoate + (6R)-5,10-methylene-5,6,7,8-tetrahydrofolate + H2O = 2-dehydropantoate + (6S)-5,6,7,8-tetrahydrofolate. It functions in the pathway cofactor biosynthesis; (R)-pantothenate biosynthesis; (R)-pantoate from 3-methyl-2-oxobutanoate: step 1/2. Functionally, catalyzes the reversible reaction in which hydroxymethyl group from 5,10-methylenetetrahydrofolate is transferred onto alpha-ketoisovalerate to form ketopantoate. This chain is 3-methyl-2-oxobutanoate hydroxymethyltransferase, found in Citrobacter koseri (strain ATCC BAA-895 / CDC 4225-83 / SGSC4696).